Reading from the N-terminus, the 381-residue chain is tRNA-specific 2-thiouridylase MnmA (381 aa).

Residues 9 to 16 (GMSGGVDS) and Met35 contribute to the ATP site. The interval 95 to 97 (NPD) is interaction with target base in tRNA. Cys100 acts as the Nucleophile in catalysis. Cys100 and Cys196 are oxidised to a cystine. Position 124 (Gly124) interacts with ATP. The segment at 146–148 (KDQ) is interaction with tRNA. Residue Cys196 is the Cysteine persulfide intermediate of the active site. The interaction with tRNA stretch occupies residues 308 to 309 (RY).

Belongs to the MnmA/TRMU family.

It localises to the cytoplasm. It carries out the reaction S-sulfanyl-L-cysteinyl-[protein] + uridine(34) in tRNA + AH2 + ATP = 2-thiouridine(34) in tRNA + L-cysteinyl-[protein] + A + AMP + diphosphate + H(+). In terms of biological role, catalyzes the 2-thiolation of uridine at the wobble position (U34) of tRNA, leading to the formation of s(2)U34. The chain is tRNA-specific 2-thiouridylase MnmA from Burkholderia multivorans (strain ATCC 17616 / 249).